The sequence spans 223 residues: DNA mismatch repair protein MutH (223 aa).

The protein belongs to the MutH family.

The protein localises to the cytoplasm. In terms of biological role, sequence-specific endonuclease that cleaves unmethylated GATC sequences. It is involved in DNA mismatch repair. This is DNA mismatch repair protein MutH from Shewanella sp. (strain W3-18-1).